The primary structure comprises 700 residues: pH-response regulator protein palI/prr-5 (700 aa).

Residues 1-8 (MLRPATPL) lie on the Cytoplasmic side of the membrane. Residues 9-29 (AVLLFAAFGLLTLATISTPII) traverse the membrane as a helical segment. Residues 30–90 (KQIPLSSFEI…PRATRSTLSS (61 aa)) are Extracellular-facing. The helical transmembrane segment at 91-111 (ILIVHPVAALITLINFVLAIV) threads the bilayer. The Cytoplasmic segment spans residues 112–123 (AHFHSPSHSARY). Residues 124–144 (LLILFIVSFVDFIVCLLCFLV) form a helical membrane-spanning segment. Topologically, residues 145–152 (DVLLFIPH) are extracellular. A helical transmembrane segment spans residues 153–173 (LSWGSYIVVAATILVAFCGLV). The Cytoplasmic segment spans residues 174 to 700 (TCAMRRTLVN…GNMPRAAGPR (527 aa)). 3 disordered regions span residues 226-491 (SGAN…GIRD), 507-560 (VPDP…PISE), and 573-700 (DVDP…AGPR). Positions 234–252 (KLPEFTTFEKKDDRSEERI) are enriched in basic and acidic residues. Residues 320-378 (GRGGMPPGGYRGRGGFPGPGRGGGPPQNGRGGYGPPGRGRGGYGPPPRGYGGPGPRGGR) are compositionally biased toward gly residues. Positions 414-424 (SPYANRQQSPG) are enriched in polar residues. 2 stretches are compositionally biased toward polar residues: residues 593 to 603 (SMQSPPASNSY) and 615 to 637 (ESEN…NSAN). Over residues 657–671 (VVPRRPVNRPGAGPA) the composition is skewed to low complexity.

It belongs to the palI/RIM9 family.

The protein localises to the cell membrane. Required for the proteolytic cleavage of the transcription factor pacc-1 in response to alkaline ambient pH. This chain is pH-response regulator protein palI/prr-5 (prr-5), found in Neurospora crassa (strain ATCC 24698 / 74-OR23-1A / CBS 708.71 / DSM 1257 / FGSC 987).